The chain runs to 288 residues: 33 kDa chaperonin (288 aa).

2 cysteine pairs are disulfide-bonded: Cys233/Cys235 and Cys267/Cys270.

This sequence belongs to the HSP33 family. In terms of processing, under oxidizing conditions two disulfide bonds are formed involving the reactive cysteines. Under reducing conditions zinc is bound to the reactive cysteines and the protein is inactive.

It is found in the cytoplasm. Redox regulated molecular chaperone. Protects both thermally unfolding and oxidatively damaged proteins from irreversible aggregation. Plays an important role in the bacterial defense system toward oxidative stress. In Actinobacillus succinogenes (strain ATCC 55618 / DSM 22257 / CCUG 43843 / 130Z), this protein is 33 kDa chaperonin.